We begin with the raw amino-acid sequence, 180 residues long: Adenine phosphoribosyltransferase (180 aa).

S2 is modified (N-acetylserine). 3 positions are modified to phosphoserine: S4, S15, and S30. Position 60 is a phosphotyrosine (Y60). At S66 the chain carries Phosphoserine. K114 carries the N6-acetyllysine modification. A Phosphothreonine modification is found at T135.

The protein belongs to the purine/pyrimidine phosphoribosyltransferase family. Homodimer.

The protein resides in the cytoplasm. It catalyses the reaction AMP + diphosphate = 5-phospho-alpha-D-ribose 1-diphosphate + adenine. It participates in purine metabolism; AMP biosynthesis via salvage pathway; AMP from adenine: step 1/1. Catalyzes a salvage reaction resulting in the formation of AMP, that is energically less costly than de novo synthesis. The polypeptide is Adenine phosphoribosyltransferase (Mus pahari (Gairdner's shrew-mouse)).